The following is a 155-amino-acid chain: Ciliary microtubule inner protein 2C (155 aa).

It belongs to the CIMIP2 family.

It is found in the cytoplasm. The protein resides in the cytoskeleton. It localises to the cilium axoneme. In terms of biological role, microtubule inner protein (MIP) part of the dynein-decorated doublet microtubules (DMTs) in cilia axoneme, which is required for motile cilia beating. This Xenopus tropicalis (Western clawed frog) protein is Ciliary microtubule inner protein 2C (cimip2c).